Consider the following 159-residue polypeptide: Aspartate carbamoyltransferase regulatory chain (159 aa).

Cys111, Cys116, Cys141, and Cys144 together coordinate Zn(2+).

It belongs to the PyrI family. As to quaternary structure, contains catalytic and regulatory chains. Zn(2+) serves as cofactor.

Involved in allosteric regulation of aspartate carbamoyltransferase. The polypeptide is Aspartate carbamoyltransferase regulatory chain (Aeropyrum pernix (strain ATCC 700893 / DSM 11879 / JCM 9820 / NBRC 100138 / K1)).